We begin with the raw amino-acid sequence, 403 residues long: Na(+)/H(+) antiporter NhaA (403 aa).

The next 11 membrane-spanning stretches (helical) occupy residues 23–43 (AFFL…PWAA), 66–86 (VAAW…ILEI), 101–121 (VALP…TYLL), 132–152 (GWAI…LALG), 161–181 (AWLM…IALF), 184–204 (GSMY…LIGA), 219–239 (GILL…AGVI), 257–277 (WVSS…FGFM), 297–317 (LGIM…ATLL), 333–353 (GMLF…LFVA), and 363–383 (IAPA…TGWF).

This sequence belongs to the NhaA Na(+)/H(+) (TC 2.A.33) antiporter family.

Its subcellular location is the cell inner membrane. It carries out the reaction Na(+)(in) + 2 H(+)(out) = Na(+)(out) + 2 H(+)(in). Its function is as follows. Na(+)/H(+) antiporter that extrudes sodium in exchange for external protons. The polypeptide is Na(+)/H(+) antiporter NhaA (Gluconobacter oxydans (strain 621H) (Gluconobacter suboxydans)).